Here is a 414-residue protein sequence, read N- to C-terminus: Glyceraldehyde-3-phosphate dehydrogenase, chloroplastic (414 aa).

A chloroplast-targeting transit peptide spans 1-76; that stretch reads MAFVAPVATV…GIVAATFGPT (76 aa). NADP(+)-binding positions include 88 to 89, D112, and R156; that span reads RI. D-glyceraldehyde 3-phosphate-binding positions include 230–232, T261, R276, 289–290, and R312; these read SCT and TG. The active-site Nucleophile is C231. N394 contacts NADP(+).

The protein belongs to the glyceraldehyde-3-phosphate dehydrogenase family. As to quaternary structure, homotetramer.

It is found in the plastid. Its subcellular location is the chloroplast. It carries out the reaction D-glyceraldehyde 3-phosphate + phosphate + NADP(+) = (2R)-3-phospho-glyceroyl phosphate + NADPH + H(+). It participates in carbohydrate biosynthesis; Calvin cycle. In Chondrus crispus (Carrageen Irish moss), this protein is Glyceraldehyde-3-phosphate dehydrogenase, chloroplastic (GAPA).